The chain runs to 326 residues: Tetraacyldisaccharide 4'-kinase (326 aa).

55 to 62 (TAGGNGKT) provides a ligand contact to ATP.

Belongs to the LpxK family.

The enzyme catalyses a lipid A disaccharide + ATP = a lipid IVA + ADP + H(+). It participates in glycolipid biosynthesis; lipid IV(A) biosynthesis; lipid IV(A) from (3R)-3-hydroxytetradecanoyl-[acyl-carrier-protein] and UDP-N-acetyl-alpha-D-glucosamine: step 6/6. Its function is as follows. Transfers the gamma-phosphate of ATP to the 4'-position of a tetraacyldisaccharide 1-phosphate intermediate (termed DS-1-P) to form tetraacyldisaccharide 1,4'-bis-phosphate (lipid IVA). The protein is Tetraacyldisaccharide 4'-kinase of Klebsiella pneumoniae subsp. pneumoniae (strain ATCC 700721 / MGH 78578).